The following is a 295-amino-acid chain: Ribosomal RNA small subunit methyltransferase A (295 aa).

S-adenosyl-L-methionine-binding residues include asparagine 33, valine 35, glycine 60, glutamate 81, aspartate 111, and asparagine 129.

Belongs to the class I-like SAM-binding methyltransferase superfamily. rRNA adenine N(6)-methyltransferase family. RsmA subfamily.

The protein localises to the cytoplasm. It catalyses the reaction adenosine(1518)/adenosine(1519) in 16S rRNA + 4 S-adenosyl-L-methionine = N(6)-dimethyladenosine(1518)/N(6)-dimethyladenosine(1519) in 16S rRNA + 4 S-adenosyl-L-homocysteine + 4 H(+). Specifically dimethylates two adjacent adenosines (A1518 and A1519) in the loop of a conserved hairpin near the 3'-end of 16S rRNA in the 30S particle. May play a critical role in biogenesis of 30S subunits. The protein is Ribosomal RNA small subunit methyltransferase A of Corynebacterium diphtheriae (strain ATCC 700971 / NCTC 13129 / Biotype gravis).